The following is a 74-amino-acid chain: Large ribosomal subunit protein uL29 (74 aa).

This sequence belongs to the universal ribosomal protein uL29 family.

In Streptomyces griseus subsp. griseus (strain JCM 4626 / CBS 651.72 / NBRC 13350 / KCC S-0626 / ISP 5235), this protein is Large ribosomal subunit protein uL29.